The primary structure comprises 269 residues: Shikimate dehydrogenase (NADP(+)) (269 aa).

Shikimate is bound by residues 22–24 (TLS) and Thr68. Lys72 serves as the catalytic Proton acceptor. 2 residues coordinate shikimate: Asn93 and Asp104. NADP(+) contacts are provided by residues 128 to 132 (GAGGA), 152 to 157 (NRTNLR), and Phe210. Tyr212 is a shikimate binding site. Gly233 contributes to the NADP(+) binding site.

This sequence belongs to the shikimate dehydrogenase family. Homodimer.

It carries out the reaction shikimate + NADP(+) = 3-dehydroshikimate + NADPH + H(+). The protein operates within metabolic intermediate biosynthesis; chorismate biosynthesis; chorismate from D-erythrose 4-phosphate and phosphoenolpyruvate: step 4/7. Its function is as follows. Involved in the biosynthesis of the chorismate, which leads to the biosynthesis of aromatic amino acids. Catalyzes the reversible NADPH linked reduction of 3-dehydroshikimate (DHSA) to yield shikimate (SA). The protein is Shikimate dehydrogenase (NADP(+)) of Saccharolobus islandicus (strain Y.N.15.51 / Yellowstone #2) (Sulfolobus islandicus).